The sequence spans 534 residues: Prolyl 4-hydroxylase subunit alpha-1 (534 aa).

The N-terminal stretch at 1–17 (MIWVVLMMAILLPQSLA) is a signal peptide. N-linked (GlcNAc...) asparagine glycosylation is present at N113. A TPR repeat occupies 205-238 (VSVLDYLSYAVYQQGDLDKALLLTKKLLELDPEH). The N-linked (GlcNAc...) asparagine glycan is linked to N259. A Fe2OG dioxygenase domain is found at 411-519 (TAEELQVANY…KWVSNKWLHE (109 aa)). The Fe cation site is built by H429, D431, and H500. K510 is a binding site for 2-oxoglutarate.

Belongs to the P4HA family. As to quaternary structure, heterotetramer of two alpha-1 chains and two beta chains (P4HB)(the beta chain is the multi-functional PDI), where P4HB plays the role of a structural subunit; this tetramer catalyzes the formation of 4-hydroxyproline in collagen. Fe(2+) serves as cofactor. Requires L-ascorbate as cofactor. Expressed at least in brain, heart and lung.

Its subcellular location is the endoplasmic reticulum lumen. The enzyme catalyses L-prolyl-[collagen] + 2-oxoglutarate + O2 = trans-4-hydroxy-L-prolyl-[collagen] + succinate + CO2. Its activity is regulated as follows. Inhibited by poly(L-proline). Its function is as follows. Catalyzes the post-translational formation of 4-hydroxyproline in -Xaa-Pro-Gly- sequences in collagens and other proteins. The protein is Prolyl 4-hydroxylase subunit alpha-1 (P4ha1) of Mus musculus (Mouse).